Here is a 278-residue protein sequence, read N- to C-terminus: S-formylglutathione hydrolase YeiG (278 aa).

Active-site charge relay system residues include Ser-145, Asp-223, and His-256.

This sequence belongs to the esterase D family.

It carries out the reaction S-formylglutathione + H2O = formate + glutathione + H(+). Serine hydrolase involved in the detoxification of formaldehyde. Hydrolyzes S-formylglutathione to glutathione and formate. The polypeptide is S-formylglutathione hydrolase YeiG (yeiG) (Shigella boydii serotype 4 (strain Sb227)).